Consider the following 230-residue polypeptide: Flagellar L-ring protein (230 aa).

Positions 1–22 are cleaved as a signal peptide; that stretch reads MSPLSNFARTALACAVAALLGG. Residue Cys23 is the site of N-palmitoyl cysteine attachment. Residue Cys23 is the site of S-diacylglycerol cysteine attachment.

Belongs to the FlgH family. As to quaternary structure, the basal body constitutes a major portion of the flagellar organelle and consists of four rings (L,P,S, and M) mounted on a central rod.

It is found in the cell outer membrane. The protein resides in the bacterial flagellum basal body. Assembles around the rod to form the L-ring and probably protects the motor/basal body from shearing forces during rotation. This chain is Flagellar L-ring protein, found in Stenotrophomonas maltophilia (strain R551-3).